The primary structure comprises 425 residues: NAC domain-containing protein 10 (425 aa).

Residues 1 to 10 (MESPDSSSGS) show a composition bias toward polar residues. The segment at 1 to 34 (MESPDSSSGSAPPRVLRRQQQQPGSAPELPPGFR) is disordered. Positions 12–23 (PPRVLRRQQQQP) are enriched in low complexity. An NAC domain is found at 29–200 (LPPGFRFHPT…DWVLCRIYKK (172 aa)). A DNA-binding region spans residues 129-206 (VGVKKALVFY…IYKKTNKAGA (78 aa)).

As to expression, highest expression in stamens. Expressed in leaves.

Its subcellular location is the nucleus. Its function is as follows. Transcription factor of the NAC family associated with male fertility. Involved in anther development, but not in senescence. Reduced expression of NAC5 via RNAi leads to male-sterility. This is NAC domain-containing protein 10 from Oryza sativa subsp. japonica (Rice).